The chain runs to 574 residues: Putative diflavin flavoprotein A 3 (574 aa).

The tract at residues 43–236 (QNGTTYNSFL…PSVKMIATGH (194 aa)) is zinc metallo-hydrolase. Residues His92, Glu94, Asp96, His159, Asp178, and His236 each coordinate Fe cation. Positions 265–409 (IGVFYVSEYG…DLGQWVTRDR (145 aa)) constitute a Flavodoxin-like domain. The interval 410–574 (SIKAMKSLGA…VHHRKVGNHY (165 aa)) is flavodoxin-reductase-like.

It in the N-terminal section; belongs to the zinc metallo-hydrolase group 3 family. This sequence in the C-terminal section; belongs to the flavodoxin reductase family. Fe cation serves as cofactor.

In terms of biological role, mediates electron transfer from NADH to oxygen, reducing it to water. This modular protein has 3 redox cofactors, in other organisms the same activity requires 2 or 3 proteins. This is Putative diflavin flavoprotein A 3 (dfa3) from Nostoc sp. (strain PCC 7120 / SAG 25.82 / UTEX 2576).